Here is a 293-residue protein sequence, read N- to C-terminus: Large ribosomal subunit protein uL18 (293 aa).

Residues 247–263 (IRANPAHEKKQPRDGLV) are compositionally biased toward basic and acidic residues. The interval 247 to 283 (IRANPAHEKKQPRDGLVKKRWNRAKMSLKQKRDRVKQ) is disordered. Positions 264-283 (KKRWNRAKMSLKQKRDRVKQ) are enriched in basic residues.

It belongs to the universal ribosomal protein uL18 family. In terms of assembly, component of the large ribosomal subunit (LSU).

It localises to the cytoplasm. The protein localises to the nucleus. Its function is as follows. Component of the ribosome, a large ribonucleoprotein complex responsible for the synthesis of proteins in the cell. The small ribosomal subunit (SSU) binds messenger RNAs (mRNAs) and translates the encoded message by selecting cognate aminoacyl-transfer RNA (tRNA) molecules. The large subunit (LSU) contains the ribosomal catalytic site termed the peptidyl transferase center (PTC), which catalyzes the formation of peptide bonds, thereby polymerizing the amino acids delivered by tRNAs into a polypeptide chain. The nascent polypeptides leave the ribosome through a tunnel in the LSU and interact with protein factors that function in enzymatic processing, targeting, and the membrane insertion of nascent chains at the exit of the ribosomal tunnel. This is Large ribosomal subunit protein uL18 (RPL5) from Suberites domuncula (Sponge).